Consider the following 1309-residue polypeptide: MIEEAIETAQRYNSQPILKRQKPIRPYICSTIDFQDERDFLAKTIFPQLNDFCSSRGTYFKAVDLRWSALKAHKSFTNNQFRQYSCLHSQHLKLCLDYVNRCFPFFICLLGQTYGDFLPDYTPFLLSKVKDLESLSKGEQNLYVAAKNGYPWVLKTPNCSLTEFEIIQAAFRKKSQFQFFYFRTSNSLLRTFSEEEEEEEEKLSSGYQVDRQGKVKVGKLKAKIIGKGLPVRFYRDLDELGDMVLKDWSAVVEELYPVTMIMENIDYKHSFENLYHEEFVENCKQVFVISKESNRTFEMLERFAIKDLELNSDSTVAGAGLDSILRINSLPTCKSILLLCGERGCGKSTLIANWVDDFKSRHPGVLMVPYFVGSTCESCDIMSVMHYFIMELQHRANGPQLEMDFLNEDSNVLVFSLLIEVFMAAISLKPCILVLDGIEELVGIYGISGQKAKDFSWLPRSLPPHCKFILSSVSSSLSCKSLCARPDVKTVELNSLGDEDTKFSIFRQHLSAPDQERFGQSKPILRKKPNLNPLKLTLIASELQECRIYRNEFQCLREYLEVASVQELWELILKRWVEDYSWPLKHKETTVDNVISGACGWVVDVLCLLCISHCGLAEDELLQILDMMGYRDHHKVTAVHWAAFRNATKNWIQEKPNGLLYFQHQSLRNAVEHKMLGVTISVRESNPNVSQNSTNHKKVHFHQVLMKYFQRQTIFWRVYQELPWHMKMSGYWEGLCGFITSPIITDFISKIQNPSLWTRLHLVHYWDVLLEAGSDVLEAFLLSAAKIEAEDSQKLKKRTTLSGMTVCPEALQATKFLTFLLFLWGFLTLLGNRRANNLFSGAAPFLVSVQSPSMTEMLLKAQNAIGELYLDIGMMQKGLTYFQKAWSNLLRFTLSDLKISQELMKQKVKVMNNLAKSASEEFLKENHVLEYATEVSKYVMDNPRDQATMRYTEGVLIPVGRVFALQGHSYSLLPILRRALGDRLSNKCMSYFSSAVLMEFLFSRSQRKQAIEYYKQVIKIKEKADSVATCKLVRKQLNISLSDTLCKLAGQLLSGDFCHHATMEAVSYLYRSLDLRAAHLGPSHASIEGILHLLREIQRSRGRRSWPQGMNQLYPEGSSCGFSLWENLPKLNFHSAQSSDTVNTAMCMNIHRFQRAKSTEPSLVSDKAKYFPGRGKKTLTPILSMSAEEKAQNSQIRNSLRKQPPRKKGVYPLKTYSLIDKNGSVRLSRQRVFSAELGSGRSLINSIYRQPLRAPLSADNPWKSISELVSEKWLFHTPHYCFTPQKSVFPRRSQIETKMLKTSHDFDKE.

TPR repeat units follow at residues 399–432 (PQLEMDFLNEDSNVLVFSLLIEVFMAAISLKPCI), 651–684 (WIQEKPNGLLYFQHQSLRNAVEHKMLGVTISVRE), 817–851 (LTFLLFLWGFLTLLGNRRANNLFSGAAPFLVSVQS), 859–892 (LKAQNAIGELYLDIGMMQKGLTYFQKAWSNLLRF), 989–1024 (MSYFSSAVLMEFLFSRSQRKQAIEYYKQVIKIKEKA), and 1042–1079 (SDTLCKLAGQLLSGDFCHHATMEAVSYLYRSLDLRAAH).

The protein localises to the cytoplasm. The protein is Tetratricopeptide repeat protein 41 of Rattus norvegicus (Rat).